A 436-amino-acid polypeptide reads, in one-letter code: Trigger factor (436 aa).

The 86-residue stretch at glycine 163–proline 248 folds into the PPIase FKBP-type domain.

Belongs to the FKBP-type PPIase family. Tig subfamily.

It is found in the cytoplasm. It carries out the reaction [protein]-peptidylproline (omega=180) = [protein]-peptidylproline (omega=0). Involved in protein export. Acts as a chaperone by maintaining the newly synthesized protein in an open conformation. Functions as a peptidyl-prolyl cis-trans isomerase. This Paracidovorax citrulli (strain AAC00-1) (Acidovorax citrulli) protein is Trigger factor.